Here is an 80-residue protein sequence, read N- to C-terminus: Putative UPF0377 protein YMR324C (80 aa).

A helical membrane pass occupies residues 13 to 33 (ACIFIDSVCEGIVFWGLCLFV).

It belongs to the UPF0377 family.

It localises to the membrane. In Saccharomyces cerevisiae (strain ATCC 204508 / S288c) (Baker's yeast), this protein is Putative UPF0377 protein YMR324C.